We begin with the raw amino-acid sequence, 428 residues long: Enolase (428 aa).

Gln163 lines the (2R)-2-phosphoglycerate pocket. The Proton donor role is filled by Glu205. The Mg(2+) site is built by Asp242, Glu285, and Asp312. Lys337, Arg366, Ser367, and Lys388 together coordinate (2R)-2-phosphoglycerate. Catalysis depends on Lys337, which acts as the Proton acceptor.

This sequence belongs to the enolase family. Mg(2+) serves as cofactor.

It is found in the cytoplasm. The protein localises to the secreted. It localises to the cell surface. The enzyme catalyses (2R)-2-phosphoglycerate = phosphoenolpyruvate + H2O. It participates in carbohydrate degradation; glycolysis; pyruvate from D-glyceraldehyde 3-phosphate: step 4/5. Catalyzes the reversible conversion of 2-phosphoglycerate (2-PG) into phosphoenolpyruvate (PEP). It is essential for the degradation of carbohydrates via glycolysis. The sequence is that of Enolase from Nitrosomonas europaea (strain ATCC 19718 / CIP 103999 / KCTC 2705 / NBRC 14298).